The primary structure comprises 224 residues: Mammalian ependymin-related protein 1 (224 aa).

The first 37 residues, M1–G37, serve as a signal peptide directing secretion. Intrachain disulfides connect C42–C172, C88–C222, and C113–C210. N130 and N182 each carry an N-linked (GlcNAc...) asparagine glycan.

It belongs to the ependymin family. As to quaternary structure, homodimer. N-glycosylated; the glycan contains mannose-6-phosphate moieties. Ubiquitous. Detected in brain, heart, skeletal muscle, kidney, testis, ovary and prostate.

The protein localises to the lysosome lumen. It localises to the secreted. In terms of biological role, binds anionic lipids and gangliosides at acidic pH. This chain is Mammalian ependymin-related protein 1 (EPDR1), found in Homo sapiens (Human).